We begin with the raw amino-acid sequence, 609 residues long: MNREERLARQSRIRNFSIIAHIDHGKSTLADRILEKTSALTQREMKDQMLDAMDLERERGITIKLNAVQLVYKANDGNEYIFHLIDTPGHVDFSYEVSRSLAACEGALLIVDAAQGIEAQTLANVYLALDNDLEILPVINKIDLPSAEPERVRQEVEDVIGLDASEAVLASAKNGIGIEEILEQIVEKVPAPSGDPEGPLKALIFDSLYDSYRGVVAYIRIVEGSVKPGQKIKMMATGKEFEVTEVGVFTPKPEKREELTVGDVGFLTASIKNVGDTRVGDTITSANNPADEPLPGYRRMNPMVYCGLYPVDTNDYNDLREALERLELNDASLQYEPETSQALGFGFRCGFLGLLHMEIIQERIEREFGIDLITTAPSVVYSVQLTNGEVQQIDNPSNMPDRQKIEEVEEPYVKATIMVPNDFVGAVMELCQGKRGIFIDMQYLDENRVQIIYEIPLSEIVYDFFDQLKSNTKGYASFDYELIGYKPSNLVKMDILLNGEVVDALSVIVHRDSAYERGKQIVEKLKELIPRQQFEVPVQASIGTKIIARSTIKAMRKNVLAKCYGGDISRKRKLLEKQKEGKKRMKAVGNVEVPQEAFMAVLRMDEPKK.

Residues 11–193 (SRIRNFSIIA…QIVEKVPAPS (183 aa)) form the tr-type G domain. GTP is bound by residues 23-28 (DHGKST) and 140-143 (NKID).

It belongs to the TRAFAC class translation factor GTPase superfamily. Classic translation factor GTPase family. LepA subfamily.

The protein localises to the cell membrane. It carries out the reaction GTP + H2O = GDP + phosphate + H(+). Its function is as follows. Required for accurate and efficient protein synthesis under certain stress conditions. May act as a fidelity factor of the translation reaction, by catalyzing a one-codon backward translocation of tRNAs on improperly translocated ribosomes. Back-translocation proceeds from a post-translocation (POST) complex to a pre-translocation (PRE) complex, thus giving elongation factor G a second chance to translocate the tRNAs correctly. Binds to ribosomes in a GTP-dependent manner. The protein is Elongation factor 4 of Halalkalibacterium halodurans (strain ATCC BAA-125 / DSM 18197 / FERM 7344 / JCM 9153 / C-125) (Bacillus halodurans).